The following is a 306-amino-acid chain: Methionyl-tRNA formyltransferase (306 aa).

110–113 (SLLP) lines the (6S)-5,6,7,8-tetrahydrofolate pocket.

The protein belongs to the Fmt family.

It carries out the reaction L-methionyl-tRNA(fMet) + (6R)-10-formyltetrahydrofolate = N-formyl-L-methionyl-tRNA(fMet) + (6S)-5,6,7,8-tetrahydrofolate + H(+). Its function is as follows. Attaches a formyl group to the free amino group of methionyl-tRNA(fMet). The formyl group appears to play a dual role in the initiator identity of N-formylmethionyl-tRNA by promoting its recognition by IF2 and preventing the misappropriation of this tRNA by the elongation apparatus. The protein is Methionyl-tRNA formyltransferase of Brucella suis biovar 1 (strain 1330).